Consider the following 243-residue polypeptide: Juxtaposed with another zinc finger protein 1 (243 aa).

The C2H2-type 1 zinc-finger motif lies at 12-37; that stretch reads NTCRFGGCGLHFPTLADLIEHIEDNH. A required for interaction with NR2C2 region spans residues 39 to 79; that stretch reads DTDPRVLEKQELQQPTYVALSYINRFMTDAARREQESLKKK. A compositionally biased stretch (polar residues) spans 89–108; sequence SSSVSRGNVSTPPRHSSGSL. The disordered stretch occupies residues 89 to 151; sequence SSSVSRGNVS…SDSDESWTTE (63 aa). Phosphothreonine occurs at positions 109 and 113. The segment covering 118–130 has biased composition (low complexity); the sequence is PSSSFRSSTPTGS. The segment covering 131 to 148 has biased composition (acidic residues); the sequence is EYDEEEVDYEESDSDESW. A C2H2-type 2 zinc finger spans residues 173–198; that stretch reads FACPVPGCKKRYKNVNGIKYHAKNGH. The C2H2-type 3; degenerate zinc finger occupies 208–230; it reads FKCRCGKSYKTAQGLRHHTINFH.

In terms of assembly, interacts with NR2C2 (via ligand-binding region). As to expression, highest expression in testis with moderate levels in colon, placenta, prostate and ovary and low levels in brain, spleen, liver and small intestine.

It localises to the nucleus. Its function is as follows. Acts as a transcriptional corepressor of orphan nuclear receptor NR2C2. Inhibits expression of the gluconeogenesis enzyme PCK2 through inhibition of NR2C2 activity. Also involved in transcriptional activation of NAMPT by promoting expression of PPARA and PPARD. Plays a role in lipid metabolism by suppressing lipogenesis, increasing lipolysis and decreasing lipid accumulation in adipose tissue. Plays a role in glucose homeostasis by improving glucose metabolism and insulin sensitivity. This is Juxtaposed with another zinc finger protein 1 from Homo sapiens (Human).